The chain runs to 227 residues: tRNA (guanine-N(7)-)-methyltransferase (227 aa).

S-adenosyl-L-methionine-binding residues include Glu-58, Glu-83, Asp-110, and Asp-132. Asp-132 is an active-site residue. Substrate contacts are provided by residues Lys-136, Asp-168, and 205-208; that span reads TRFE.

This sequence belongs to the class I-like SAM-binding methyltransferase superfamily. TrmB family.

It catalyses the reaction guanosine(46) in tRNA + S-adenosyl-L-methionine = N(7)-methylguanosine(46) in tRNA + S-adenosyl-L-homocysteine. It participates in tRNA modification; N(7)-methylguanine-tRNA biosynthesis. Its function is as follows. Catalyzes the formation of N(7)-methylguanine at position 46 (m7G46) in tRNA. The sequence is that of tRNA (guanine-N(7)-)-methyltransferase from Acidithiobacillus ferrooxidans (strain ATCC 23270 / DSM 14882 / CIP 104768 / NCIMB 8455) (Ferrobacillus ferrooxidans (strain ATCC 23270)).